The following is a 407-amino-acid chain: Aurora kinase (407 aa).

2 disordered regions span residues 1–43 and 66–137; these read MTPT…STSS and ERQG…TQSK. Low complexity-rich tracts occupy residues 31–43 and 126–136; these read SAST…STSS and STTTTMTSTQS. Residues 147–399 enclose the Protein kinase domain; that stretch reads FDIGRPLGKG…LEGVIAHAWI (253 aa). Residues K157, K176, and 224 to 227 each bind ATP; that span reads LEYA. The active-site Proton acceptor is D272. D290 is a binding site for ATP.

The protein belongs to the protein kinase superfamily. Ser/Thr protein kinase family.

It localises to the cytoplasm. The protein resides in the cytoskeleton. Its subcellular location is the spindle. The protein localises to the midbody. It is found in the microtubule organizing center. It localises to the centrosome. The protein resides in the nucleus. Its subcellular location is the chromosome. The protein localises to the centromere. It carries out the reaction L-seryl-[protein] + ATP = O-phospho-L-seryl-[protein] + ADP + H(+). The catalysed reaction is L-threonyl-[protein] + ATP = O-phospho-L-threonyl-[protein] + ADP + H(+). Its activity is regulated as follows. Cdc2 activity is required for activation. In terms of biological role, serine/threonine protein kinase that contributes to the regulation of cell cycle progression. Involved in meiotic apparatus formation and polar body extrusion. Contributes to Plk1 activation and phosphorylation of histone H3 at 'Ser-10' during meiosis I. Required for accurate progression of early embryonic M phase. Involved in chromosome alignment and cleavage furrow formation during early embryonic cycles. May be involved in mitotic spindle formation and cytokinesis. This is Aurora kinase from Patiria pectinifera (Starfish).